Here is a 148-residue protein sequence, read N- to C-terminus: D-aminoacyl-tRNA deacylase (148 aa).

The Gly-cisPro motif, important for rejection of L-amino acids motif lies at G136 to P137.

The protein belongs to the DTD family. Homodimer.

It is found in the cytoplasm. It carries out the reaction glycyl-tRNA(Ala) + H2O = tRNA(Ala) + glycine + H(+). It catalyses the reaction a D-aminoacyl-tRNA + H2O = a tRNA + a D-alpha-amino acid + H(+). An aminoacyl-tRNA editing enzyme that deacylates mischarged D-aminoacyl-tRNAs. Also deacylates mischarged glycyl-tRNA(Ala), protecting cells against glycine mischarging by AlaRS. Acts via tRNA-based rather than protein-based catalysis; rejects L-amino acids rather than detecting D-amino acids in the active site. By recycling D-aminoacyl-tRNA to D-amino acids and free tRNA molecules, this enzyme counteracts the toxicity associated with the formation of D-aminoacyl-tRNA entities in vivo and helps enforce protein L-homochirality. The polypeptide is D-aminoacyl-tRNA deacylase (Kosmotoga olearia (strain ATCC BAA-1733 / DSM 21960 / TBF 19.5.1)).